Consider the following 275-residue polypeptide: Orotidine 5'-phosphate decarboxylase (275 aa).

Residue lysine 95 is the Proton donor of the active site.

The protein belongs to the OMP decarboxylase family. Type 2 subfamily.

The enzyme catalyses orotidine 5'-phosphate + H(+) = UMP + CO2. It functions in the pathway pyrimidine metabolism; UMP biosynthesis via de novo pathway; UMP from orotate: step 2/2. The chain is Orotidine 5'-phosphate decarboxylase from Delftia acidovorans (strain DSM 14801 / SPH-1).